Consider the following 427-residue polypeptide: Glutamate-1-semialdehyde 2,1-aminomutase (427 aa).

At Lys265 the chain carries N6-(pyridoxal phosphate)lysine.

Belongs to the class-III pyridoxal-phosphate-dependent aminotransferase family. HemL subfamily. Homodimer. Pyridoxal 5'-phosphate serves as cofactor.

The protein localises to the cytoplasm. The enzyme catalyses (S)-4-amino-5-oxopentanoate = 5-aminolevulinate. Its pathway is porphyrin-containing compound metabolism; protoporphyrin-IX biosynthesis; 5-aminolevulinate from L-glutamyl-tRNA(Glu): step 2/2. The chain is Glutamate-1-semialdehyde 2,1-aminomutase from Neisseria meningitidis serogroup A / serotype 4A (strain DSM 15465 / Z2491).